The chain runs to 270 residues: ES1 protein, mitochondrial (270 aa).

As to expression, expressed specifically in the inner segments of cone photoreceptor cells of the retina (at protein level).

It localises to the mitochondrion. Its function is as follows. Plays a role in promoting mitochondrial enlargement in cone photoreceptor cells in a fusion-independent and ATP-dependent manner. This chain is ES1 protein, mitochondrial, found in Danio rerio (Zebrafish).